The following is a 1487-amino-acid chain: Major viral transcription factor ICP4 homolog (1487 aa).

Disordered regions lie at residues alanine 41–glycine 295, leucine 310–alanine 370, and proline 803–arginine 1007. Residues valine 66–glutamate 75 show a composition bias toward pro residues. 2 stretches are compositionally biased toward low complexity: residues proline 165–serine 193 and aspartate 201–serine 213. The segment covering aspartate 214–glutamate 224 has biased composition (acidic residues). The segment covering alanine 235 to glycine 272 has biased composition (low complexity). Pro residues predominate over residues alanine 273–serine 285. Low complexity-rich tracts occupy residues serine 807–serine 829, proline 849–glutamine 860, and alanine 867–glutamine 877. The segment covering threonine 878–arginine 893 has biased composition (polar residues). The segment covering histidine 920 to lysine 929 has biased composition (basic residues). Residues alanine 938 to alanine 951 are compositionally biased toward low complexity. Residues glycine 988–arginine 1007 are compositionally biased toward basic and acidic residues.

Belongs to the herpesviridae ICP4 family. Post-translationally, a long stretch of serine residues may be a major site of phosphorylation.

The protein resides in the host nucleus. Functionally, this IE protein is a multifunctional protein capable of migrating to the nucleus, binding to DNA, trans-activating other viral genes, and autoregulating its own synthesis. In Equus caballus (Horse), this protein is Major viral transcription factor ICP4 homolog (IE).